A 220-amino-acid polypeptide reads, in one-letter code: Sec-independent protein translocase protein TatB (220 aa).

A helical membrane pass occupies residues 1–21 (MFDIGFSELLLVLVIGLVVLG). A disordered region spans residues 192–220 (KQQIDTIDSHGTDLSSAGPSRIHQPGGDQ).

This sequence belongs to the TatB family. The Tat system comprises two distinct complexes: a TatABC complex, containing multiple copies of TatA, TatB and TatC subunits, and a separate TatA complex, containing only TatA subunits. Substrates initially bind to the TatABC complex, which probably triggers association of the separate TatA complex to form the active translocon.

The protein localises to the cell inner membrane. Part of the twin-arginine translocation (Tat) system that transports large folded proteins containing a characteristic twin-arginine motif in their signal peptide across membranes. Together with TatC, TatB is part of a receptor directly interacting with Tat signal peptides. TatB may form an oligomeric binding site that transiently accommodates folded Tat precursor proteins before their translocation. In Yersinia pestis bv. Antiqua (strain Antiqua), this protein is Sec-independent protein translocase protein TatB.